The sequence spans 37 residues: Large ribosomal subunit protein bL36c (37 aa).

Belongs to the bacterial ribosomal protein bL36 family.

It is found in the plastid. The protein resides in the chloroplast. In Cucumis sativus (Cucumber), this protein is Large ribosomal subunit protein bL36c.